A 132-amino-acid chain; its full sequence is Small ribosomal subunit protein uS8 (132 aa).

Belongs to the universal ribosomal protein uS8 family. As to quaternary structure, part of the 30S ribosomal subunit. Contacts proteins S5 and S12.

Its function is as follows. One of the primary rRNA binding proteins, it binds directly to 16S rRNA central domain where it helps coordinate assembly of the platform of the 30S subunit. This Caldicellulosiruptor bescii (strain ATCC BAA-1888 / DSM 6725 / KCTC 15123 / Z-1320) (Anaerocellum thermophilum) protein is Small ribosomal subunit protein uS8.